The sequence spans 380 residues: Rab9 effector protein with kelch motifs (380 aa).

6 Kelch repeats span residues 57–103 (KIFI…FLPS), 108–154 (SIWV…TSSA), 159–211 (QLYV…AAGT), 212–258 (KLFI…AAVA), 262–311 (HVYM…VIPW), and 357–380 (LCFV…TVVD).

As to quaternary structure, interacts with PIKFYVE; the interaction recruits RABEPK to the endosomal membrane. Interacts with RAB9 in its GTP-bound conformation. Phosphorylated on Ser residues by PIKFYVE.

Its subcellular location is the cytoplasm. It is found in the endosome membrane. Its function is as follows. Rab9 effector required for endosome to trans-Golgi network (TGN) transport. This chain is Rab9 effector protein with kelch motifs, found in Mus musculus (Mouse).